The sequence spans 127 residues: Nuclear transport factor 2 (127 aa).

Residues 11 to 124 enclose the NTF2 domain; sequence VGKQFVEHYY…FLLINDFFRL (114 aa).

The protein localises to the cytoplasm. It localises to the cytosol. It is found in the nucleus outer membrane. The protein resides in the nucleus. Its subcellular location is the nuclear pore complex. The protein localises to the nucleus inner membrane. It localises to the nucleoplasm. In terms of biological role, mediates the import of GDP-bound RAN from the cytoplasm into the nucleus which is essential for the function of RAN in cargo receptor-mediated nucleocytoplasmic transport. Thereby, plays indirectly a more general role in cargo receptor-mediated nucleocytoplasmic transport. Interacts with GDP-bound RAN in the cytosol, recruits it to the nuclear pore complex via its interaction with nucleoporins and promotes its nuclear import. This is Nuclear transport factor 2 from Dictyostelium discoideum (Social amoeba).